Here is a 476-residue protein sequence, read N- to C-terminus: Arginine biosynthesis bifunctional protein ArgJ, mitochondrial (476 aa).

Positions 204, 233, 244, 331, 471, and 476 each coordinate substrate. The Nucleophile role is filled by Thr244.

Belongs to the ArgJ family. Heterodimer of an alpha and a beta chain. The alpha and beta chains are autoproteolytically processed from a single precursor protein within the mitochondrion.

It localises to the mitochondrion matrix. The catalysed reaction is N(2)-acetyl-L-ornithine + L-glutamate = N-acetyl-L-glutamate + L-ornithine. It carries out the reaction L-glutamate + acetyl-CoA = N-acetyl-L-glutamate + CoA + H(+). It functions in the pathway amino-acid biosynthesis; L-arginine biosynthesis; L-ornithine and N-acetyl-L-glutamate from L-glutamate and N(2)-acetyl-L-ornithine (cyclic): step 1/1. Its pathway is amino-acid biosynthesis; L-arginine biosynthesis; N(2)-acetyl-L-ornithine from L-glutamate: step 1/4. Catalyzes two activities which are involved in the cyclic version of arginine biosynthesis: the synthesis of acetylglutamate from glutamate and acetyl-CoA, and of ornithine by transacetylation between acetylornithine and glutamate. The polypeptide is Arginine biosynthesis bifunctional protein ArgJ, mitochondrial (Arthroderma otae (strain ATCC MYA-4605 / CBS 113480) (Microsporum canis)).